A 673-amino-acid chain; its full sequence is DNA ligase (673 aa).

NAD(+) contacts are provided by residues 35–39 (DAEYD), 84–85 (SL), and Glu115. The active-site N6-AMP-lysine intermediate is Lys117. 4 residues coordinate NAD(+): Arg138, Glu175, Lys292, and Lys316. Zn(2+) contacts are provided by Cys410, Cys413, Cys428, and Cys434. The BRCT domain maps to 592–673 (PRKLPLQGLV…FLDLLERGRP (82 aa)).

Belongs to the NAD-dependent DNA ligase family. LigA subfamily. Mg(2+) serves as cofactor. Requires Mn(2+) as cofactor.

The enzyme catalyses NAD(+) + (deoxyribonucleotide)n-3'-hydroxyl + 5'-phospho-(deoxyribonucleotide)m = (deoxyribonucleotide)n+m + AMP + beta-nicotinamide D-nucleotide.. Functionally, DNA ligase that catalyzes the formation of phosphodiester linkages between 5'-phosphoryl and 3'-hydroxyl groups in double-stranded DNA using NAD as a coenzyme and as the energy source for the reaction. It is essential for DNA replication and repair of damaged DNA. The polypeptide is DNA ligase (Methylococcus capsulatus (strain ATCC 33009 / NCIMB 11132 / Bath)).